Here is a 78-residue protein sequence, read N- to C-terminus: Acyl carrier protein (78 aa).

The 76-residue stretch at 2-77 (STIEERVKKI…AAIDYINGHQ (76 aa)) folds into the Carrier domain. Position 37 is an O-(pantetheine 4'-phosphoryl)serine (Ser-37).

The protein belongs to the acyl carrier protein (ACP) family. Post-translationally, 4'-phosphopantetheine is transferred from CoA to a specific serine of apo-ACP by AcpS. This modification is essential for activity because fatty acids are bound in thioester linkage to the sulfhydryl of the prosthetic group.

It localises to the cytoplasm. Its pathway is lipid metabolism; fatty acid biosynthesis. Its function is as follows. Carrier of the growing fatty acid chain in fatty acid biosynthesis. The chain is Acyl carrier protein from Erwinia tasmaniensis (strain DSM 17950 / CFBP 7177 / CIP 109463 / NCPPB 4357 / Et1/99).